The sequence spans 330 residues: Atypical chemokine receptor 1 (330 aa).

Over 1–57 (MGNCLYPVADDNSTKLAIKEDFLIDFPEDYYPDYNETDVEAAAPCHSCSLLNYSSLP) the chain is Extracellular. N-linked (GlcNAc...) asparagine glycans are attached at residues Asn-12, Asn-35, and Asn-52. 2 disulfides stabilise this stretch: Cys-45/Cys-270 and Cys-123/Cys-189. Residues 58–78 (FFILVSILGILASGTILYALL) form a helical membrane-spanning segment. The Cytoplasmic segment spans residues 79–89 (RPLFRWQLYQD). The helical transmembrane segment at 90–110 (RSTLVQLAVGSALFSIVVPIL) threads the bilayer. Topologically, residues 111-123 (ARGLSGALITSLC) are extracellular. The helical transmembrane segment at 124 to 147 (HLAHLVAYGSAFAQALLIGYHACL) threads the bilayer. Over 148–160 (GPQLGAGQVPGLR) the chain is Cytoplasmic. The helical transmembrane segment at 161-181 (LGVTVGLWGVAALLSLPVVLG) threads the bilayer. Over 182-201 (SDTSQGLCTVTFSGEWETLR) the chain is Extracellular. The chain crosses the membrane as a helical span at residues 202 to 222 (YIHAAACFAIFVLLPLGLLGT). At 223–238 (KGLKTVLGRAPCPWVD) the chain is on the cytoplasmic side. Residues 239 to 259 (VLWVWFIFWWPQGMTLGLDSL) traverse the membrane as a helical segment. Over 260 to 281 (VRSKAIVVSTCPAQQALDMLLD) the chain is Extracellular. A helical membrane pass occupies residues 282–302 (VAEALAILHCVATPLLLAWVC). Residues 303–330 (YQATHTSPPSLPLPTTQTSHLDTLGGKS) lie on the Cytoplasmic side of the membrane.

It belongs to the G-protein coupled receptor 1 family. Atypical chemokine receptor subfamily.

It is found in the early endosome. It localises to the recycling endosome. The protein localises to the membrane. In terms of biological role, atypical chemokine receptor that controls chemokine levels and localization via high-affinity chemokine binding that is uncoupled from classic ligand-driven signal transduction cascades, resulting instead in chemokine sequestration, degradation, or transcytosis. Also known as interceptor (internalizing receptor) or chemokine-scavenging receptor or chemokine decoy receptor. Has a promiscuous chemokine-binding profile, interacting with inflammatory chemokines of both the CXC and the CC subfamilies but not with homeostatic chemokines. Acts as a receptor for chemokines including CCL2, CCL5, CCL7, CCL11, CCL13, CCL14, CCL17, CXCL5, CXCL6, IL8/CXCL8, CXCL11, GRO, RANTES, MCP-1 and TARC. May regulate chemokine bioavailability and, consequently, leukocyte recruitment through two distinct mechanisms: when expressed in endothelial cells, it sustains the abluminal to luminal transcytosis of tissue-derived chemokines and their subsequent presentation to circulating leukocytes; when expressed in erythrocytes, serves as blood reservoir of cognate chemokines but also as a chemokine sink, buffering potential surges in plasma chemokine levels. This chain is Atypical chemokine receptor 1 (ACKR1), found in Bos taurus (Bovine).